The chain runs to 2222 residues: Voltage-dependent R-type calcium channel subunit alpha-1E (2222 aa).

Residues 1–40 (MALYNPIPVRQNCFTVNRSLFIFGEDNIVRKYAKKLIDWP) lie on the Cytoplasmic side of the membrane. The I repeat unit spans residues 27–305 (NIVRKYAKKL…LVLGVLSGEF (279 aa)). A helical membrane pass occupies residues 41-59 (PFEYMILATIIANCIVLAL). The Extracellular portion of the chain corresponds to 60 to 78 (EQHLPEDDKTPMSRRLEKT). Residues 79–97 (EPYFIGIFCFEAGIKIVAL) traverse the membrane as a helical segment. The Cytoplasmic segment spans residues 98-109 (GFIFHKGSYLRN). The helical transmembrane segment at 110–124 (GWNVMDFIVVLSGIL) threads the bilayer. The Extracellular portion of the chain corresponds to 125-136 (ATAGTHFNTHVD). The chain crosses the membrane as a helical span at residues 137–156 (LRTLRAVRVLRPLKLVSGIP). Topologically, residues 157–174 (SLQIVLKSIMKAMVPLLQ) are cytoplasmic. The helical transmembrane segment at 175–195 (IGLLLFFAILMFAIIGLEFYS) threads the bilayer. Residues 196 to 277 (GKLHRACFMN…NTNDALGATW (82 aa)) are Extracellular-facing. Asn-205 carries an N-linked (GlcNAc...) asparagine glycan. The helical transmembrane segment at 278–301 (NWLYFIPLIIIGSFFVLNLVLGVL) threads the bilayer. At 302–427 (SGEFAKERER…ISIRHMVKSQ (126 aa)) the chain is on the cytoplasmic side. Residues 325-342 (QQIERELNGYRAWIDKAE) form a binding to the beta subunit region. Asp-377 is a Ca(2+) binding site. Ser-378 is modified (phosphoserine). Residues Ser-379, Glu-381, and Cys-383 each coordinate Ca(2+). At Thr-391 the chain carries Phosphothreonine. The II repeat unit spans residues 413–657 (ERLLRISIRH…VFLAIAVDNL (245 aa)). Residues 428–447 (VFYWIVLSVVALNTACVAIV) form a helical membrane-spanning segment. Residues 448–460 (HHNQPQWLTHLLY) lie on the Extracellular side of the membrane. Residues 461-480 (YAEFLFLGLFLLEMSLKMYG) form a helical membrane-spanning segment. Topologically, residues 481 to 489 (MGPRLYFHS) are cytoplasmic. Residues 490-508 (SFNCFDFGVTVGSIFEVVW) traverse the membrane as a helical segment. Over 509–518 (AIFRPGTSFG) the chain is Extracellular. A helical transmembrane segment spans residues 519–537 (ISVLRALRLLRIFKITKYW). At 538 to 556 (ASLRNLVVSLMSSMKSIIS) the chain is on the cytoplasmic side. The helical transmembrane segment at 557 to 576 (LLFLLFLFIVVFALLGMQLF) threads the bilayer. Residues 577–629 (GGRFNFNDGTPSANFDTFPAAIMTVFQILTGEDWNEVMYNGIRSQGGVSSGMW) lie on the Extracellular side of the membrane. Residues 630 to 654 (SAIYFIVLTLFGNYTLLNVFLAIAV) form a helical membrane-spanning segment. Over 655 to 1100 (DNLANAQELT…TNPIRKACHY (446 aa)) the chain is Cytoplasmic. Positions 680 to 727 (LQKAKEVSPMSAPNMPSIERDRRRRHHMSMWEPRSSHLRERRRRHHMS) are disordered. A phosphoserine mark is found at Ser-687, Ser-696, Ser-744, Ser-766, and Ser-806. Disordered stretches follow at residues 820–944 (NQRS…VPRG) and 1042–1076 (NKTD…RETG). Positions 864–877 (RHRQSQRRSRHRRV) are enriched in basic residues. A compositionally biased stretch (low complexity) spans 884-896 (SASASRSRSASQE). Phosphoserine is present on Ser-898. Basic and acidic residues-rich tracts occupy residues 906-935 (DGEK…DLRR) and 1044-1055 (TDGEASPLKEAE). Ser-1049 carries the post-translational modification Phosphoserine. The stretch at 1092–1378 (NPIRKACHYI…IFVALIIITF (287 aa)) is one III repeat. Residues 1101–1117 (IVNLRYFEMCILLVIAA) traverse the membrane as a helical segment. The Extracellular segment spans residues 1118–1141 (SSIALAAEDPVLTNSERNKVLRYF). Residues 1142–1161 (DYVFTGVFTFEMVIKMIDQG) form a helical membrane-spanning segment. The Cytoplasmic segment spans residues 1162-1169 (LILQDGSY). The helical transmembrane segment at 1170–1192 (FRDLWNILDFVVVVGALVAFALA) threads the bilayer. Over 1193 to 1206 (NALGTNKGRDIKTI) the chain is Extracellular. Residues 1207–1224 (KSLRVLRVLRPLKTIKRL) form a helical membrane-spanning segment. The Cytoplasmic segment spans residues 1225 to 1243 (PKLKAVFDCVVTSLKNVFN). Residues 1244-1263 (ILIVYKLFMFIFAVIAVQLF) traverse the membrane as a helical segment. Residues 1264 to 1350 (KGKFFYCTDS…RGPSRSNRME (87 aa)) lie on the Extracellular side of the membrane. Residues 1351–1374 (MSIFYVVYFVVFPFFFVNIFVALI) traverse the membrane as a helical segment. Residues 1375-1431 (IITFQEQGDKMMEECSLEKNERACIDFAISAKPLTRYMPQNRHTFQYRVWHFVVSPS) lie on the Cytoplasmic side of the membrane. The IV repeat unit spans residues 1415 to 1678 (NRHTFQYRVW…LFVAVIMDNF (264 aa)). The chain crosses the membrane as a helical span at residues 1432–1450 (FEYTIMAMIALNTVVLMMK). Topologically, residues 1451 to 1467 (YYSAPWTYELALKYLNI) are extracellular. Residues 1468-1485 (AFTMVFSLECVLKVIAFG) traverse the membrane as a helical segment. Over 1486-1493 (FLNYFRDT) the chain is Cytoplasmic. A helical transmembrane segment spans residues 1494–1512 (WNIFDFITVIGSITEIILT). Over 1513–1523 (DSKLVNTSGFN) the chain is Extracellular. N-linked (GlcNAc...) asparagine glycosylation is found at Asn-1518 and Asn-1523. A helical membrane pass occupies residues 1524 to 1542 (MSFLKLFRAARLIKLLRQG). The Cytoplasmic portion of the chain corresponds to 1543–1561 (YTIRILLWTFVQSFKALPY). A helical transmembrane segment spans residues 1562–1581 (VCLLIAMLFFIYAIIGMQVF). Residues 1582-1650 (GNIKLDEESH…NESERCGTDL (69 aa)) are Extracellular-facing. The N-linked (GlcNAc...) asparagine glycan is linked to Asn-1641. Residues 1651–1676 (AYVYFVSFIFFCSFLMLNLFVAVIMD) form a helical membrane-spanning segment. The Cytoplasmic segment spans residues 1677–2222 (NFEYLTRDSS…LSDTEEDDKC (546 aa)). The 36-residue stretch at 1691 to 1726 (HHLDEFVRVWAEYDRAACGRIHYTEMYEMLTLMSPP) folds into the EF-hand domain. Residues Asp-1704, Arg-1710, and Glu-1715 each contribute to the Ca(2+) site. The disordered stretch occupies residues 1970-2135 (SAHRLNSDSG…QQGQHPSPQH (166 aa)). Residues 1974 to 1994 (LNSDSGHKSDTHRSGGRERGR) are compositionally biased toward basic and acidic residues. Ser-2003 and Ser-2022 each carry phosphoserine. Residues 2010 to 2027 (NSEERGTQADWESPERRQ) are compositionally biased toward basic and acidic residues. Residues 2046 to 2061 (SLSESSIPSISDTSTP) are compositionally biased toward low complexity. Polar residues predominate over residues 2104–2123 (LASQALESNSACLTESSNSL). Residues 2124–2135 (HPQQGQHPSPQH) show a composition bias toward low complexity.

It belongs to the calcium channel alpha-1 subunit (TC 1.A.1.11) family. CACNA1E subfamily. Interacts with EFHC1. Voltage-dependent calcium channels are multisubunit complexes, consisting of alpha-1, alpha-2, beta and delta subunits in a 1:1:1:1 ratio. The channel activity is directed by the pore-forming and voltage-sensitive alpha-1 subunit. In many cases, this subunit is sufficient to generate voltage-sensitive calcium channel activity. The auxiliary subunits beta and alpha-2/delta linked by a disulfide bridge regulate the channel activity. Expressed in central nervous system and in insulinoma.

It is found in the membrane. The catalysed reaction is Ca(2+)(in) = Ca(2+)(out). Functionally, voltage-sensitive calcium channels (VSCC) mediate the entry of calcium ions into excitable cells and are also involved in a variety of calcium-dependent processes, including muscle contraction, hormone or neurotransmitter release, gene expression, cell motility, cell division and cell death. The isoform alpha-1E gives rise to R-type calcium currents. R-type calcium channels belong to the 'high-voltage activated' (HVA) group and are blocked by nickel. They are however insensitive to dihydropyridines (DHP). Calcium channels containing alpha-1E subunit could be involved in the modulation of firing patterns of neurons which is important for information processing. The chain is Voltage-dependent R-type calcium channel subunit alpha-1E (Cacna1e) from Rattus norvegicus (Rat).